We begin with the raw amino-acid sequence, 254 residues long: Phosphomannomutase (254 aa).

Asp19 serves as the catalytic Nucleophile. Mg(2+)-binding residues include Asp19 and Asp21. Asp21 serves as the catalytic Proton donor/acceptor. Residues Arg28, Arg130, Arg141, Arg148, Ser186, and Asp188 each contribute to the alpha-D-mannose 1-phosphate site. Asp216, Phe228, Asp230, and Thr233 together coordinate Mg(2+). Ser240 is subject to Phosphoserine.

Belongs to the eukaryotic PMM family. As to quaternary structure, homodimer.

Its subcellular location is the cytoplasm. The catalysed reaction is alpha-D-mannose 1-phosphate = D-mannose 6-phosphate. It functions in the pathway nucleotide-sugar biosynthesis; GDP-alpha-D-mannose biosynthesis; alpha-D-mannose 1-phosphate from D-fructose 6-phosphate: step 2/2. In terms of biological role, involved in the synthesis of the GDP-mannose and dolichol-phosphate-mannose required for a number of critical mannosyl transfer reactions such as folding and glycosylation of secretory proteins in the ER lumen. This chain is Phosphomannomutase, found in Saccharomyces cerevisiae (strain ATCC 204508 / S288c) (Baker's yeast).